A 122-amino-acid chain; its full sequence is Large ribosomal subunit protein uL14 (122 aa).

Belongs to the universal ribosomal protein uL14 family. As to quaternary structure, part of the 50S ribosomal subunit. Forms a cluster with proteins L3 and L19. In the 70S ribosome, L14 and L19 interact and together make contacts with the 16S rRNA in bridges B5 and B8.

Its function is as follows. Binds to 23S rRNA. Forms part of two intersubunit bridges in the 70S ribosome. This Micrococcus luteus (Micrococcus lysodeikticus) protein is Large ribosomal subunit protein uL14.